The sequence spans 1074 residues: ADAMTS-like protein 4 (1074 aa).

The N-terminal stretch at 1-24 (MENWTGRPWLYLLLLLSLPQLCLD) is a signal peptide. The region spanning 48 to 93 (GPWVQWASCSQPCGVGVQRRSRTCQLPTVQLHPSLPLPPRPPRHPE) is the TSP type-1 1 domain. The interval 77 to 342 (QLHPSLPLPP…QHPGAWLPLL (266 aa)) is disordered. A compositionally biased stretch (polar residues) spans 103 to 119 (RPQTSPETLPLYRTQSR). Positions 132-152 (LGREETQEIRAARRSRLRDPI) are enriched in basic and acidic residues. Positions 206–226 (ANGSPQTELPPTELSVHTPSP) are enriched in polar residues. Positions 310–323 (GQQGQGPWGTGGTP) are enriched in gly residues. The N-linked (GlcNAc...) (complex) asparagine glycan is linked to Asn-490. TSP type-1 domains lie at 723-782 (CPPY…QLRL), 783-842 (CGHW…GPCT), 845-909 (WFHS…GPCE), 910-969 (RTWR…QGQA), and 970-1026 (CQDR…QPCS). N-linked (GlcNAc...) asparagine glycosylation is present at Asn-773. One can recognise a PLAC domain in the interval 1029 to 1066 (PDDQCKDSSPHCPLVVQARLCVYPYYTATCCRSCAHVL).

In terms of assembly, interacts with CTSB. Interacts with FBN1. Post-translationally, N-glycosylated. Can be O-fucosylated by POFUT2 on a serine or a threonine residue found within the consensus sequence C1-X(2)-(S/T)-C2-G of the TSP type-1 repeat domains where C1 and C2 are the first and second cysteine residue of the repeat, respectively. Fucosylated repeats can then be further glycosylated by the addition of a beta-1,3-glucose residue by the glucosyltransferase, B3GALTL. Fucosylation mediates the efficient secretion of ADAMTS family members. Can also be C-glycosylated with one or two mannose molecules on tryptophan residues within the consensus sequence W-X-X-W of the TPRs. N- and C-glycosylations can also facilitate secretion. Expressed in colon, heart, leukocyte, liver, lung, skeletal muscle, spleen, testis and placenta. Weaker expression in bone marrow, brain tissue, kidney and pancreas. Expression studies in fetal tissues reveal strong expression in heart, kidney, liver, lung and skeletal muscle, but weaker expression in fetal brain and skin.

Its subcellular location is the secreted. The protein resides in the extracellular space. It localises to the extracellular matrix. Positive regulation of apoptosis. May facilitate FBN1 microfibril biogenesis. This chain is ADAMTS-like protein 4 (ADAMTSL4), found in Homo sapiens (Human).